The following is a 353-amino-acid chain: MTASLERRESASLWGRFCDWITSTENRLYIGWFGVLMIPTLLTATSVFIIAFIAAPPVDIDGIREPVSGSLLYGNNIISGAIIPTSAAIGLHFYPIWEAASVDEWLYNGGPYELIVLHFLLGVACYMGREWELSFRLGMRPWIAVAYSAPVAAAAAVFLIYPIGQGSFSDGMPLGISGTFNFMIVFQAEHNILMHPFHMLGVAGVFGGSLFSAMHGSLVTSSLIRETTENESANAGYKFGQEEETYNIVAAHGYFGRLIFQYASFNNSRSLHFFLAAWPVVGIWFTALGISTMAFNLNGFNFNQSVVDSQGRVINTWADIINRANLGMEVMHERNAHNFPLDLASVEAPSVKA.

Residue T2 is modified to N-acetylthreonine. At T2 the chain carries Phosphothreonine. A run of 3 helical transmembrane segments spans residues 29-46 (YIGWFGVLMIPTLLTATS), 118-133 (HFLLGVACYMGREWEL), and 142-156 (WIAVAYSAPVAAAAA). H118 provides a ligand contact to chlorophyll a. A pheophytin a-binding site is contributed by Y126. Positions 170 and 189 each coordinate [CaMn4O5] cluster. The chain crosses the membrane as a helical span at residues 197–218 (FHMLGVAGVFGGSLFSAMHGSL). Chlorophyll a is bound at residue H198. A quinone-binding positions include H215 and 264-265 (SF). H215 provides a ligand contact to Fe cation. Position 272 (H272) interacts with Fe cation. Residues 274–288 (FLAAWPVVGIWFTAL) traverse the membrane as a helical segment. H332, E333, D342, and A344 together coordinate [CaMn4O5] cluster. Residues 345–353 (SVEAPSVKA) constitute a propeptide that is removed on maturation.

This sequence belongs to the reaction center PufL/M/PsbA/D family. PSII is composed of 1 copy each of membrane proteins PsbA, PsbB, PsbC, PsbD, PsbE, PsbF, PsbH, PsbI, PsbJ, PsbK, PsbL, PsbM, PsbT, PsbX, PsbY, PsbZ, Psb30/Ycf12, at least 3 peripheral proteins of the oxygen-evolving complex and a large number of cofactors. It forms dimeric complexes. Requires The D1/D2 heterodimer binds P680, chlorophylls that are the primary electron donor of PSII, and subsequent electron acceptors. It shares a non-heme iron and each subunit binds pheophytin, quinone, additional chlorophylls, carotenoids and lipids. D1 provides most of the ligands for the Mn4-Ca-O5 cluster of the oxygen-evolving complex (OEC). There is also a Cl(-1) ion associated with D1 and D2, which is required for oxygen evolution. The PSII complex binds additional chlorophylls, carotenoids and specific lipids. as cofactor. Tyr-161 forms a radical intermediate that is referred to as redox-active TyrZ, YZ or Y-Z. In terms of processing, C-terminally processed by CTPA; processing is essential to allow assembly of the oxygen-evolving complex and thus photosynthetic growth.

The protein localises to the plastid. The protein resides in the chloroplast thylakoid membrane. It carries out the reaction 2 a plastoquinone + 4 hnu + 2 H2O = 2 a plastoquinol + O2. Its function is as follows. Photosystem II (PSII) is a light-driven water:plastoquinone oxidoreductase that uses light energy to abstract electrons from H(2)O, generating O(2) and a proton gradient subsequently used for ATP formation. It consists of a core antenna complex that captures photons, and an electron transfer chain that converts photonic excitation into a charge separation. The D1/D2 (PsbA/PsbD) reaction center heterodimer binds P680, the primary electron donor of PSII as well as several subsequent electron acceptors. This Angiopteris evecta (Mule's foot fern) protein is Photosystem II protein D1.